Reading from the N-terminus, the 234-residue chain is 7-cyano-7-deazaguanine synthase (234 aa).

7–17 (LSGGLDSAVCM) contributes to the ATP binding site. Zn(2+)-binding residues include Cys-197, Cys-208, Cys-211, and Cys-214.

It belongs to the QueC family. Zn(2+) is required as a cofactor.

The catalysed reaction is 7-carboxy-7-deazaguanine + NH4(+) + ATP = 7-cyano-7-deazaguanine + ADP + phosphate + H2O + H(+). Its pathway is purine metabolism; 7-cyano-7-deazaguanine biosynthesis. Functionally, catalyzes the ATP-dependent conversion of 7-carboxy-7-deazaguanine (CDG) to 7-cyano-7-deazaguanine (preQ(0)). The sequence is that of 7-cyano-7-deazaguanine synthase from Methanococcus aeolicus (strain ATCC BAA-1280 / DSM 17508 / OCM 812 / Nankai-3).